Reading from the N-terminus, the 349-residue chain is Hypoxia-inducible factor 1-alpha inhibitor (349 aa).

Over residues 1-14 (MAATAAEVAASGSG) the composition is skewed to low complexity. Residues 1–51 (MAATAAEVAASGSGEAREEAEAPGPAWDESQLRSYSFPTRPIPRLSQSDPR) form a disordered region. Residue alanine 2 is modified to N-acetylalanine. An interaction with VHL region spans residues 2 to 125 (AATAAEVAAS…PRSNREEIKF (124 aa)). A JmjC domain is found at 142–307 (ERLYLQQTLN…KGAPTPKRIE (166 aa)). Tyrosine 145 contributes to the 2-oxoglutarate binding site. Residues aspartate 152 and 181–183 (QLT) contribute to the substrate site. Threonine 196 contributes to the 2-oxoglutarate binding site. Fe cation-binding residues include histidine 199 and aspartate 201. Substrate is bound at residue 201 to 203 (DEQ). Residues asparagine 205 and lysine 214 each contribute to the 2-oxoglutarate site. 238–239 (RQ) is a substrate binding site. Histidine 279 contacts Fe cation. Asparagine 294 is a 2-oxoglutarate binding site. Alanine 300 and asparagine 321 together coordinate substrate.

Homodimer; homodimerization is essential for catalytic activity. Interacts with VHL and HIF1A. Part of a complex with VHL, HIF1A and HDAC1 or HDAC2 or HDAC3. Interacts with NFKB1 and NFKBIA. Interacts with NOTCH1, NOTCH2 and NOTCH3 but not with NOTCH4. Interacts with ABPA3. Interacts with TNKS2. Interacts with PPP1R12A. Interacts with UBE3A. Interacts with ASB4. Interacts with ANKS3. Interacts with NECAB3; the interaction is indirect and seems to be mediated by APBA3. It depends on Fe(2+) as a cofactor.

Its subcellular location is the nucleus. The protein localises to the cytoplasm. It is found in the perinuclear region. The catalysed reaction is L-asparaginyl-[hypoxia-inducible factor alpha subunit] + 2-oxoglutarate + O2 = (3S)-3-hydroxy-L-asparaginyl-[hypoxia-inducible factor alpha subunit] + succinate + CO2. It catalyses the reaction L-histidyl-[ankyrin-repeat domain protein] + 2-oxoglutarate + O2 = (3S)-3-hydroxy-L-histidyl-[ankyrin-repeat domain protein] + succinate + CO2. It carries out the reaction L-asparaginyl-[ankyrin-repeat domain protein] + 2-oxoglutarate + O2 = (3S)-3-hydroxy-L-asparaginyl-[ankyrin-repeat domain protein] + succinate + CO2. The enzyme catalyses L-aspartyl-[ankyrin-repeat domain protein] + 2-oxoglutarate + O2 = (3S)-3-hydroxy-L-aspartyl-[ankyrin-repeat domain protein] + succinate + CO2. Hydroxylates HIF-1 alpha at 'Asn-799' in the C-terminal transactivation domain (CAD). Functions as an oxygen sensor and, under normoxic conditions, the hydroxylation prevents interaction of HIF-1 with transcriptional coactivators including Cbp/p300-interacting transactivator. Involved in transcriptional repression through interaction with HIF1A, VHL and histone deacetylases. Hydroxylates specific Asn residues within ankyrin repeat domains (ARD) of NFKB1, NFKBIA, NOTCH1, ASB4, PPP1R12A and several other ARD-containing proteins. Also hydroxylates Asp and His residues within ARDs of ANK1 and TNKS2, respectively. Negatively regulates NOTCH1 activity, accelerating myogenic differentiation. Positively regulates ASB4 activity, promoting vascular differentiation. This is Hypoxia-inducible factor 1-alpha inhibitor (Hif1an) from Mus musculus (Mouse).